The following is a 396-amino-acid chain: S-adenosylmethionine synthase 3 (396 aa).

Residue glutamate 12 participates in Mg(2+) binding. Histidine 18 contributes to the ATP binding site. A K(+)-binding site is contributed by glutamate 46. Residues glutamate 59 and glutamine 102 each contribute to the L-methionine site. ATP-binding positions include 170–172, 238–241, aspartate 249, 255–256, alanine 272, lysine 276, and lysine 280; these read DGK, SGRF, and RK. Aspartate 249 lines the L-methionine pocket. Lysine 280 serves as a coordination point for L-methionine.

The protein belongs to the AdoMet synthase family. In terms of assembly, homotetramer. Mn(2+) is required as a cofactor. Requires Mg(2+) as cofactor. The cofactor is Co(2+). K(+) serves as cofactor.

The protein localises to the cytoplasm. It carries out the reaction L-methionine + ATP + H2O = S-adenosyl-L-methionine + phosphate + diphosphate. The protein operates within amino-acid biosynthesis; S-adenosyl-L-methionine biosynthesis; S-adenosyl-L-methionine from L-methionine: step 1/1. Its function is as follows. Catalyzes the formation of S-adenosylmethionine from methionine and ATP. The reaction comprises two steps that are both catalyzed by the same enzyme: formation of S-adenosylmethionine (AdoMet) and triphosphate, and subsequent hydrolysis of the triphosphate. The protein is S-adenosylmethionine synthase 3 (METK3) of Oryza sativa subsp. japonica (Rice).